We begin with the raw amino-acid sequence, 1293 residues long: Phosphoribosylformylglycinamidine synthase (1293 aa).

Residues 305–316 (GAATGSGGEIRD) and Ala676 each bind ATP. Mg(2+) is bound by residues Asp677, Glu716, Asn720, and Asp884. Residue Ser886 coordinates ATP. Residues 1040 to 1293 (MAILREQGVN…MFRNARVKLG (254 aa)) form the Glutamine amidotransferase type-1 domain. Cys1133 serves as the catalytic Nucleophile. Active-site residues include His1258 and Glu1260.

It in the N-terminal section; belongs to the FGAMS family. Monomer.

It is found in the cytoplasm. It catalyses the reaction N(2)-formyl-N(1)-(5-phospho-beta-D-ribosyl)glycinamide + L-glutamine + ATP + H2O = 2-formamido-N(1)-(5-O-phospho-beta-D-ribosyl)acetamidine + L-glutamate + ADP + phosphate + H(+). It functions in the pathway purine metabolism; IMP biosynthesis via de novo pathway; 5-amino-1-(5-phospho-D-ribosyl)imidazole from N(2)-formyl-N(1)-(5-phospho-D-ribosyl)glycinamide: step 1/2. Functionally, phosphoribosylformylglycinamidine synthase involved in the purines biosynthetic pathway. Catalyzes the ATP-dependent conversion of formylglycinamide ribonucleotide (FGAR) and glutamine to yield formylglycinamidine ribonucleotide (FGAM) and glutamate. This is Phosphoribosylformylglycinamidine synthase from Shewanella denitrificans (strain OS217 / ATCC BAA-1090 / DSM 15013).